Here is a 946-residue protein sequence, read N- to C-terminus: Protocadherin alpha-10 (946 aa).

The signal sequence occupies residues 1–30 (MSCVAMKYCHESWCLLLSLLLFAIWEPGSG). Cadherin domains follow at residues 31–134 (QLRY…PPVF), 135–243 (PTTE…APAF), 244–351 (DRAI…APKI), 352–456 (IVTS…APAF), 457–566 (AQSE…APTL), and 582–679 (VPRS…APKA). Residues 31–697 (QLRYSVPEEA…ASESSVVDVN (667 aa)) are Extracellular-facing. A glycan (N-linked (GlcNAc...) asparagine) is linked at asparagine 258. Residue asparagine 549 is glycosylated (N-linked (GlcNAc...) asparagine). The chain crosses the membrane as a helical span at residues 698 to 718 (VYLIIAICAVSSLLVLTLVLY). Over 719–946 (TALRCSALPT…GNSTTDNSDQ (228 aa)) the chain is Cytoplasmic. 6 PXXP repeats span residues 734–737 (PGKP), 774–777 (PSVP), 795–798 (PRQP), 828–831 (PGGP), 869–872 (PGNP), and 887–890 (PGSP). The tract at residues 734-890 (PGKPMLVCSS…PDKFIIPGSP (157 aa)) is 6 X 4 AA repeats of P-X-X-P. Disordered stretches follow at residues 826–852 (AGPG…EVSP) and 865–946 (FKYG…NSDQ). Basic and acidic residues predominate over residues 905–919 (DKSDFITFGKKEETK).

It localises to the cell membrane. Potential calcium-dependent cell-adhesion protein. May be involved in the establishment and maintenance of specific neuronal connections in the brain. The protein is Protocadherin alpha-10 of Mus musculus (Mouse).